The sequence spans 209 residues: Glutathione S-transferase 1-1 (209 aa).

One can recognise a GST N-terminal domain in the interval 1-81; sequence MADFYYLPGS…YLVEKYGKTD (81 aa). Glutathione-binding positions include S10, 51–53, and 65–67; these read HTI and ESR. The GST C-terminal domain occupies 87-209; sequence CPKKRAVINQ…GCLEFKKYFE (123 aa).

It belongs to the GST superfamily. Theta family. In terms of assembly, homodimer.

It carries out the reaction RX + glutathione = an S-substituted glutathione + a halide anion + H(+). The catalysed reaction is 1,1,1-trichloro-2,2-bis(4-chlorophenyl)ethane = 1,1-dichloro-2,2-bis(4-chlorophenyl)ethylene + chloride + H(+). In terms of biological role, conjugation of reduced glutathione to a wide number of exogenous and endogenous hydrophobic electrophiles. Has DDT dehydrochlorinase activity. The chain is Glutathione S-transferase 1-1 (GstD1) from Drosophila simulans (Fruit fly).